Here is an 884-residue protein sequence, read N- to C-terminus: uncharacterized protein (884 aa).

This is an uncharacterized protein from Mycobacterium bovis (strain ATCC BAA-935 / AF2122/97).